The sequence spans 257 residues: 4-hydroxy-tetrahydrodipicolinate reductase (257 aa).

Residues 7–12 (GAAGRM), D32, 91–93 (GTT), and 115–118 (SPNF) contribute to the NAD(+) site. H147 functions as the Proton donor/acceptor in the catalytic mechanism. H148 provides a ligand contact to (S)-2,3,4,5-tetrahydrodipicolinate. The Proton donor role is filled by K151. Position 157–158 (157–158 (GT)) interacts with (S)-2,3,4,5-tetrahydrodipicolinate.

It belongs to the DapB family.

It is found in the cytoplasm. The catalysed reaction is (S)-2,3,4,5-tetrahydrodipicolinate + NAD(+) + H2O = (2S,4S)-4-hydroxy-2,3,4,5-tetrahydrodipicolinate + NADH + H(+). It catalyses the reaction (S)-2,3,4,5-tetrahydrodipicolinate + NADP(+) + H2O = (2S,4S)-4-hydroxy-2,3,4,5-tetrahydrodipicolinate + NADPH + H(+). The protein operates within amino-acid biosynthesis; L-lysine biosynthesis via DAP pathway; (S)-tetrahydrodipicolinate from L-aspartate: step 4/4. In terms of biological role, catalyzes the conversion of 4-hydroxy-tetrahydrodipicolinate (HTPA) to tetrahydrodipicolinate. The chain is 4-hydroxy-tetrahydrodipicolinate reductase from Archaeoglobus fulgidus (strain ATCC 49558 / DSM 4304 / JCM 9628 / NBRC 100126 / VC-16).